We begin with the raw amino-acid sequence, 448 residues long: Argininosuccinate synthase (448 aa).

ATP contacts are provided by residues 17 to 25 (AFSGGLDTS) and Ala43. Tyr99 contacts L-citrulline. Positions 129 and 131 each coordinate ATP. L-aspartate-binding residues include Thr131, Asn135, and Asp136. Asn135 provides a ligand contact to L-citrulline. Position 136 (Asp136) interacts with ATP. Residues Arg139 and Ser192 each coordinate L-citrulline. Asp194 serves as a coordination point for ATP. Thr201, Glu203, and Glu280 together coordinate L-citrulline.

It belongs to the argininosuccinate synthase family. Type 2 subfamily. Homotetramer.

The protein resides in the cytoplasm. It carries out the reaction L-citrulline + L-aspartate + ATP = 2-(N(omega)-L-arginino)succinate + AMP + diphosphate + H(+). Its pathway is amino-acid biosynthesis; L-arginine biosynthesis; L-arginine from L-ornithine and carbamoyl phosphate: step 2/3. The sequence is that of Argininosuccinate synthase from Acidovorax ebreus (strain TPSY) (Diaphorobacter sp. (strain TPSY)).